The chain runs to 119 residues: Flagellar transcriptional regulator FlhD (119 aa).

It belongs to the FlhD family. Homodimer; disulfide-linked. Forms a heterohexamer composed of two FlhC and four FlhD subunits. Each FlhC binds a FlhD dimer, forming a heterotrimer, and a hexamer assembles by dimerization of two heterotrimers.

The protein resides in the cytoplasm. Its function is as follows. Functions in complex with FlhC as a master transcriptional regulator that regulates transcription of several flagellar and non-flagellar operons by binding to their promoter region. Activates expression of class 2 flagellar genes, including fliA, which is a flagellum-specific sigma factor that turns on the class 3 genes. Also regulates genes whose products function in a variety of physiological pathways. This Cronobacter sakazakii (strain ATCC BAA-894) (Enterobacter sakazakii) protein is Flagellar transcriptional regulator FlhD.